Here is a 527-residue protein sequence, read N- to C-terminus: Organic cation/carnitine transporter 2 (527 aa).

Residues 1–27 (MAEPTQPLLTDSNSSSPRSLDDTIESY) are Cytoplasmic-facing. Residues 28–48 (IGSFGWAQFLQAALVSFSGVF) form a helical membrane-spanning segment. The Extracellular segment spans residues 49–119 (DAQQTFISVF…SFVKGLPESS (71 aa)). A helical membrane pass occupies residues 120 to 140 (FFVGCLIGGLVLSTLADSSLG). At 141–149 (RKNMLFLSC) the chain is on the cytoplasmic side. The helical transmembrane segment at 150–170 (LVMAISTMLTVFSPNIWVYAV) threads the bilayer. At 171–176 (LRFVNG) the chain is on the extracellular side. The helical transmembrane segment at 177–195 (FGRATIGTCALVLSTELVG) threads the bilayer. 190–197 (STELVGKK) lines the ATP pocket. The Cytoplasmic segment spans residues 196–201 (KKWRGR). Residues 202–222 (VGIMSFFGFMLGFLSLPLMAY) traverse the membrane as a helical segment. The Extracellular segment spans residues 223 to 230 (MNRGSSWR). A helical membrane pass occupies residues 231 to 251 (ILYAWTSIPTIIYCVLVRFFV). Residues 252–326 (CESPRWLFVR…LVEKRWALKR (75 aa)) are Cytoplasmic-facing. A helical membrane pass occupies residues 327-347 (LSAVMAIAFGIGLVYYGMPLA). Residues 348 to 356 (LSNLDFNIY) lie on the Extracellular side of the membrane. The chain crosses the membrane as a helical span at residues 357–377 (LSAAFNALMDLPANLITLFLV). The Cytoplasmic segment spans residues 378-385 (DKLSRRNA). The chain crosses the membrane as a helical span at residues 386-406 (LIGFTALGGVSSVLIFALHNM). Over 407–415 (RIGNHGALQ) the chain is Extracellular. Residues 416-436 (LALELISYFSACSAFNMEMIY) traverse the membrane as a helical segment. Topologically, residues 437 to 448 (TIELFPTCVRNS) are cytoplasmic. The chain crosses the membrane as a helical span at residues 449 to 469 (AIAMARQALVLGGVFSPIMVA). The Extracellular segment spans residues 470–475 (AGRKNA). The chain crosses the membrane as a helical span at residues 476 to 496 (FWSFGLFGLAIGLLGLFAVGL). The Cytoplasmic segment spans residues 497 to 527 (PETRGSDLCDTMDEEECKDRRSKVAVNNVIA).

The protein belongs to the major facilitator (TC 2.A.1) superfamily. Organic cation transporter (TC 2.A.1.19) family. Weakly expressed in roots, including tips and initiation site of lateral roots, siliques and flowers, especially in pollen and stigma.

The protein localises to the vacuole membrane. High affinity carnitine transporter involved in the active cellular uptake of carnitine. Also transports organic cations. This is Organic cation/carnitine transporter 2 (OCT2) from Arabidopsis thaliana (Mouse-ear cress).